We begin with the raw amino-acid sequence, 173 residues long: Copper transport protein ctr5 (173 aa).

The Extracellular portion of the chain corresponds to 1-54 (MSLSKMSMSGMSGMGMGSSSNSSAATCRMSMLWNWYIHDSCFLAKSWHINTGNK). The chain crosses the membrane as a helical span at residues 55-75 (FAGSIIGIFFFAVAIEGLSLV). Topologically, residues 76–135 (QRMFDRWIVAHSNGKTLSGPLRIFFPSSTVHVTVWQQLIRAAMYSSFYLSATILMLIVMS) are cytoplasmic. The helical transmembrane segment at 136–156 (FNGYAILFGFVGAWIGFFLFA) threads the bilayer. The Extracellular portion of the chain corresponds to 157–173 (SDTYGTPSTGTGCCESR).

This sequence belongs to the copper transporter (Ctr) (TC 1.A.56) family. SLC31A subfamily. In terms of assembly, interacts with ctr4.

It is found in the membrane. In terms of biological role, required for high affinity copper (probably reduced Cu I) transport into the cell. The sequence is that of Copper transport protein ctr5 (ctr5) from Schizosaccharomyces pombe (strain 972 / ATCC 24843) (Fission yeast).